The sequence spans 525 residues: Vanin-like protein 2 (525 aa).

A signal peptide spans 1–27 (MAKNYWGFFLFCLALGLMLNLSQQASL). Residues asparagine 20 and asparagine 61 are each glycosylated (N-linked (GlcNAc...) asparagine). Positions 33–303 (YTAGVVEFEP…RSIYVARVPK (271 aa)) constitute a CN hydrolase domain. The active-site Proton acceptor is the glutamate 72. 3 N-linked (GlcNAc...) asparagine glycosylation sites follow: asparagine 99, asparagine 116, and asparagine 124. Lysine 167 serves as the catalytic Proton donor. An N-linked (GlcNAc...) asparagine glycan is attached at asparagine 176. Cysteine 199 acts as the Nucleophile in catalysis. N-linked (GlcNAc...) asparagine glycosylation is found at asparagine 333, asparagine 348, and asparagine 375.

The protein belongs to the carbon-nitrogen hydrolase superfamily. BTD/VNN family. Expressed in third instar larvae.

The protein resides in the secreted. This Drosophila melanogaster (Fruit fly) protein is Vanin-like protein 2.